A 213-amino-acid chain; its full sequence is Putative manganese efflux pump MntP (213 aa).

6 helical membrane passes run 3-23 (ILSI…VSVA), 36-56 (ALKV…IGWG), 67-87 (AFDH…MIFE), 130-150 (LAIA…FLGI), 152-172 (IVQT…LGVI), and 187-207 (IVGG…HTGI).

This sequence belongs to the MntP (TC 9.B.29) family.

It localises to the cell membrane. Its function is as follows. Probably functions as a manganese efflux pump. The protein is Putative manganese efflux pump MntP of Clostridium perfringens (strain SM101 / Type A).